The following is a 208-amino-acid chain: Small ribosomal subunit protein uS4A (208 aa).

The S4 RNA-binding domain occupies 98–164 (TRLDNVVYTL…AKIQSAIQAV (67 aa)).

Belongs to the universal ribosomal protein uS4 family. In terms of assembly, part of the 30S ribosomal subunit. Contacts protein S5. The interaction surface between S4 and S5 is involved in control of translational fidelity.

In terms of biological role, one of the primary rRNA binding proteins, it binds directly to 16S rRNA where it nucleates assembly of the body of the 30S subunit. Its function is as follows. With S5 and S12 plays an important role in translational accuracy. The sequence is that of Small ribosomal subunit protein uS4A from Bdellovibrio bacteriovorus (strain ATCC 15356 / DSM 50701 / NCIMB 9529 / HD100).